Consider the following 459-residue polypeptide: Cysteine--tRNA ligase (459 aa).

Cys-28 lines the Zn(2+) pocket. The 'HIGH' region signature appears at 30-40 (VTIYDLCHIGH). Positions 209, 234, and 238 each coordinate Zn(2+). The short motif at 266–270 (KMSKS) is the 'KMSKS' region element. Lys-269 contacts ATP.

This sequence belongs to the class-I aminoacyl-tRNA synthetase family. In terms of assembly, monomer. Zn(2+) is required as a cofactor.

The protein resides in the cytoplasm. It catalyses the reaction tRNA(Cys) + L-cysteine + ATP = L-cysteinyl-tRNA(Cys) + AMP + diphosphate. This is Cysteine--tRNA ligase from Shewanella piezotolerans (strain WP3 / JCM 13877).